A 545-amino-acid polypeptide reads, in one-letter code: Chaperonin GroEL 2 (545 aa).

Residues 29 to 32, 86 to 90, Gly413, 479 to 481, and Asp495 contribute to the ATP site; these read TLGP, DGTTT, and NAA.

It belongs to the chaperonin (HSP60) family. As to quaternary structure, forms a cylinder of 14 subunits composed of two heptameric rings stacked back-to-back. Interacts with the co-chaperonin GroES.

The protein resides in the cytoplasm. The enzyme catalyses ATP + H2O + a folded polypeptide = ADP + phosphate + an unfolded polypeptide.. Its function is as follows. Together with its co-chaperonin GroES, plays an essential role in assisting protein folding. The GroEL-GroES system forms a nano-cage that allows encapsulation of the non-native substrate proteins and provides a physical environment optimized to promote and accelerate protein folding. The chain is Chaperonin GroEL 2 from Prochlorococcus marinus (strain MIT 9215).